The sequence spans 477 residues: Zinc finger C3HC-type protein 1-like (477 aa).

The C3HC-type zinc finger occupies 95 to 149 (CAKYGWCNIECDMLKCSSCNAYLCASLQPILDFSKYKQRCVELQEALRKAHEKFC). The segment at 287–392 (SLSAPGTPVS…SSSSDTSPRS (106 aa)) is disordered. Over residues 354–363 (SMGQGENTGL) the composition is skewed to polar residues. The span at 370–379 (SPHRRAKRPR) shows a compositional bias: basic residues. The segment covering 382–392 (SSSSSDTSPRS) has biased composition (low complexity).

In terms of processing, phosphorylated. May also be weakly phosphorylated on Tyr residues.

Its subcellular location is the nucleus. It is found in the nucleus envelope. Its function is as follows. Required for proper positioning of a substantial amount of TPR at the nuclear basket (NB) through interaction with TPR. The polypeptide is Zinc finger C3HC-type protein 1-like (zc3hc1) (Xenopus laevis (African clawed frog)).